Consider the following 601-residue polypeptide: ATP-dependent lipid A-core flippase (601 aa).

Residues 28-328 (LLSVVGLIVY…LTRVNAEFQR (301 aa)) enclose the ABC transmembrane type-1 domain. The next 6 helical transmembrane spans lie at 32–52 (VGLI…GPFI), 81–101 (VLLM…FANF), 160–180 (ALIS…LMFY), 183–203 (WKLS…ITIV), 267–287 (AVSQ…VLYA), and 296–316 (DLTA…LQPI). The ABC transporter domain occupies 360–597 (LRFDNVSFSY…GGMYAKLYQM (238 aa)). An ATP-binding site is contributed by 394–401 (GRSGSGKS).

Belongs to the ABC transporter superfamily. Lipid exporter (TC 3.A.1.106) family. In terms of assembly, homodimer.

It is found in the cell inner membrane. The enzyme catalyses ATP + H2O + lipid A-core oligosaccharideSide 1 = ADP + phosphate + lipid A-core oligosaccharideSide 2.. Functionally, involved in lipopolysaccharide (LPS) biosynthesis. Translocates lipid A-core from the inner to the outer leaflet of the inner membrane. Transmembrane domains (TMD) form a pore in the inner membrane and the ATP-binding domain (NBD) is responsible for energy generation. This chain is ATP-dependent lipid A-core flippase, found in Shewanella oneidensis (strain ATCC 700550 / JCM 31522 / CIP 106686 / LMG 19005 / NCIMB 14063 / MR-1).